The sequence spans 582 residues: Insulin-like growth factor 2 mRNA-binding protein 3 (582 aa).

RRM domains are found at residues 2–75 (NKLY…HSVP) and 81–156 (CKLQ…YIPD). A disordered region spans residues 164–190 (PAVGGRRGFNPRGPPRQGSPSLGARPK). Position 182 is a phosphoserine (serine 182). KH domains are found at residues 194–259 (DVPL…CRNI), 275–342 (EIPL…EEEI), 408–473 (SETV…QGRI), and 490–556 (KLEA…QRKI). Residues 562–582 (QVRRQQQPKPSAAGPPVARRK) form a disordered region.

This sequence belongs to the RRM IMP/VICKZ family. Homodimer and multimer.

The protein localises to the cytoplasm. It localises to the nucleus. The protein resides in the P-body. It is found in the stress granule. In terms of biological role, RNA-binding factor that may recruit target transcripts to cytoplasmic protein-RNA complexes (mRNPs). This transcript 'caging' into mRNPs allows mRNA transport and transient storage. It also modulates the rate and location at which target transcripts encounter the translational apparatus and shields them from endonuclease attacks or microRNA-mediated degradation. Preferentially binds to N6-methyladenosine (m6A)-containing mRNAs and increases their stability. Involved in neuronal crest migration. The sequence is that of Insulin-like growth factor 2 mRNA-binding protein 3 (igf2bp3) from Danio rerio (Zebrafish).